The chain runs to 295 residues: Diaminopimelate epimerase (295 aa).

Substrate-binding residues include asparagine 11 and asparagine 78. Cysteine 87 serves as the catalytic Proton donor. Residues 88–89 (GN), asparagine 163, asparagine 199, and 220–221 (ER) each bind substrate. Cysteine 229 serves as the catalytic Proton acceptor. 230–231 (GT) is a substrate binding site.

The protein belongs to the diaminopimelate epimerase family. Homodimer.

The protein localises to the cytoplasm. The catalysed reaction is (2S,6S)-2,6-diaminopimelate = meso-2,6-diaminopimelate. Its pathway is amino-acid biosynthesis; L-lysine biosynthesis via DAP pathway; DL-2,6-diaminopimelate from LL-2,6-diaminopimelate: step 1/1. Its function is as follows. Catalyzes the stereoinversion of LL-2,6-diaminopimelate (L,L-DAP) to meso-diaminopimelate (meso-DAP), a precursor of L-lysine and an essential component of the bacterial peptidoglycan. In Mycobacteroides abscessus (strain ATCC 19977 / DSM 44196 / CCUG 20993 / CIP 104536 / JCM 13569 / NCTC 13031 / TMC 1543 / L948) (Mycobacterium abscessus), this protein is Diaminopimelate epimerase.